We begin with the raw amino-acid sequence, 195 residues long: MRFCFFFFCFTASIFCTTGNSSDIVFCCAHTPCLLHLEVDQETSVTWIDSNTGQIPLCLSNGTCHISEKGLHFSANFSKDGLYIAIINETNYHAAEHYYLVYIYENCHQMPYDSPRHTGHKGTSFNWSMGLWLVKCSHNKTFFLPFVLDSAKSAPIIMTETAITIYISMIFLIVSLLTFLNVLITLNNKYKHYGV.

N-linked (GlcNAc...) asparagine; by host glycans are attached at residues Asn20, Asn61, Asn76, Asn88, Asn126, and Asn139.

The chain is Early E3 22.2 kDa glycoprotein from Canine adenovirus serotype 1 (strain Glaxo) (CAdV-1).